The chain runs to 1356 residues: Kinesin-like protein KIF24 (1356 aa).

One can recognise an SAM domain in the interval 1-64 (MASWLYECLC…FQLIKIIKIM (64 aa)). The interval 93–119 (GPRRQLHFDSPSASKDKMANNETGSLS) is disordered. S102 is subject to Phosphoserine. The Kinesin motor domain maps to 218-541 (KIRVCVRKRP…LRYADRVKEL (324 aa)). 308–315 (GQTGAGKT) contacts ATP. Phosphoserine is present on S473. The segment at 473–702 (SLLALKECIR…PTRGKKVQPV (230 aa)) is interaction with MPHOSPH9. Residues 552–571 (TSQNQTSANASPKRIQSSPV) are compositionally biased toward polar residues. 5 disordered regions span residues 552–581 (TSQN…CSPK), 597–664 (PTKV…LCSE), 788–840 (EGRL…STAL), 897–947 (RGAL…HQKP), and 964–998 (VPEQ…DQRD). At S579 the chain carries Phosphoserine. At T615 the chain carries Phosphothreonine; by NEK2. Position 616 is a phosphoserine; by NEK2 (S616). S640, S817, and S820 each carry phosphoserine. Residues 640–653 (SPRKGTTRSGHSIK) are compositionally biased toward basic residues. Residues 810–821 (QAEDLDDSDFSE) show a composition bias toward acidic residues. Polar residues predominate over residues 830–840 (QPAMKQGSTAL). Over residues 970-979 (GSLSSPSPEN) the composition is skewed to polar residues. S1008 carries the post-translational modification Phosphoserine. A disordered region spans residues 1109-1140 (LSSSPPDNRPSGDLPALSPSPIHQHSPDKLPG).

Belongs to the TRAFAC class myosin-kinesin ATPase superfamily. Kinesin family. Interacts with CCP110, CEP97, TALPID3. Interacts with MPHOSPH9. As to expression, expressed in brain, spinal cord, and small intestine.

It is found in the cytoplasm. The protein localises to the cytoskeleton. The protein resides in the microtubule organizing center. It localises to the centrosome. Its subcellular location is the centriole. Functionally, microtubule-dependent motor protein that acts as a negative regulator of ciliogenesis by mediating recruitment of CCP110 to mother centriole in cycling cells, leading to restrict nucleation of cilia at centrioles. Mediates depolymerization of microtubules of centriolar origin, possibly to suppress aberrant cilia formation. Following activation by NEK2 involved in disassembly of primary cilium during G2/M phase but does not disassemble fully formed ciliary axonemes. As cilium assembly and disassembly is proposed to coexist in a dynamic equilibrium may suppress nascent cilium assembly and, potentially, ciliar re-assembly in cells that have already disassembled their cilia ensuring the completion of cilium removal in the later stages of the cell cycle. Plays an important role in recruiting MPHOSPH9, a negative regulator of cilia formation to the distal end of mother centriole. In Mus musculus (Mouse), this protein is Kinesin-like protein KIF24 (Kif24).